The primary structure comprises 450 residues: Ribosomal protein uS12 methylthiotransferase RimO (450 aa).

The MTTase N-terminal domain occupies 10–125; it reads SRIALVSLGC…VVDIVRRAAT (116 aa). [4Fe-4S] cluster is bound by residues cysteine 19, cysteine 54, cysteine 88, cysteine 162, cysteine 166, and cysteine 169. In terms of domain architecture, Radical SAM core spans 148–378; sequence SGSPFTAYLK…AAVQREVSRA (231 aa). A TRAM domain is found at 381–447; sequence RARVGSEVTV…PYDLRARVLS (67 aa).

The protein belongs to the methylthiotransferase family. RimO subfamily. [4Fe-4S] cluster is required as a cofactor.

Its subcellular location is the cytoplasm. The enzyme catalyses L-aspartate(89)-[ribosomal protein uS12]-hydrogen + (sulfur carrier)-SH + AH2 + 2 S-adenosyl-L-methionine = 3-methylsulfanyl-L-aspartate(89)-[ribosomal protein uS12]-hydrogen + (sulfur carrier)-H + 5'-deoxyadenosine + L-methionine + A + S-adenosyl-L-homocysteine + 2 H(+). In terms of biological role, catalyzes the methylthiolation of an aspartic acid residue of ribosomal protein uS12. The chain is Ribosomal protein uS12 methylthiotransferase RimO from Desulforudis audaxviator (strain MP104C).